Here is a 240-residue protein sequence, read N- to C-terminus: Ribitol-5-phosphate cytidylyltransferase (240 aa).

CTP-binding positions include 8–11 (FAGG) and 81–87 (GETGQMS).

This sequence belongs to the IspD/TarI cytidylyltransferase family. TarI subfamily.

The catalysed reaction is D-ribitol 5-phosphate + CTP + H(+) = CDP-L-ribitol + diphosphate. Its pathway is cell wall biogenesis; poly(ribitol phosphate) teichoic acid biosynthesis. In terms of biological role, catalyzes the transfer of the cytidylyl group of CTP to D-ribitol 5-phosphate. The polypeptide is Ribitol-5-phosphate cytidylyltransferase (Streptococcus agalactiae serotype V (strain ATCC BAA-611 / 2603 V/R)).